The primary structure comprises 277 residues: Phosphatidylglycerol--prolipoprotein diacylglyceryl transferase (277 aa).

The next 4 membrane-spanning stretches (helical) occupy residues 15 to 35, 50 to 70, 89 to 109, and 112 to 132; these read IHVR…TFMS, IDLL…YYVI, GGIA…VFCY, and FLPP…AQVL. An a 1,2-diacyl-sn-glycero-3-phospho-(1'-sn-glycerol)-binding site is contributed by Arg-134. Transmembrane regions (helical) follow at residues 174-194, 204-224, and 234-254; these read KPTF…ILSL, GEVF…VEGM, and VIRV…ILFV.

The protein belongs to the Lgt family.

The protein localises to the cell membrane. It catalyses the reaction L-cysteinyl-[prolipoprotein] + a 1,2-diacyl-sn-glycero-3-phospho-(1'-sn-glycerol) = an S-1,2-diacyl-sn-glyceryl-L-cysteinyl-[prolipoprotein] + sn-glycerol 1-phosphate + H(+). Its pathway is protein modification; lipoprotein biosynthesis (diacylglyceryl transfer). Catalyzes the transfer of the diacylglyceryl group from phosphatidylglycerol to the sulfhydryl group of the N-terminal cysteine of a prolipoprotein, the first step in the formation of mature lipoproteins. The protein is Phosphatidylglycerol--prolipoprotein diacylglyceryl transferase of Lactobacillus delbrueckii subsp. bulgaricus (strain ATCC 11842 / DSM 20081 / BCRC 10696 / JCM 1002 / NBRC 13953 / NCIMB 11778 / NCTC 12712 / WDCM 00102 / Lb 14).